We begin with the raw amino-acid sequence, 498 residues long: Protein flp (498 aa).

4 helical membrane-spanning segments follow: residues 6–26, 389–409, 433–453, and 471–491; these read LYFLSISIIILVAISIAIYIT, FNIVTVLMTTLILLAFIFSAY, LSLCICIALALILYALPYLIL, and LALITTLIALFSTLIVILLFL.

The protein localises to the cell membrane. Its precise function is unknown. Has no penicillin-binding activity and is not involved in methicillin resistance. This is Protein flp (flp) from Staphylococcus aureus (strain NCTC 8325 / PS 47).